The primary structure comprises 435 residues: Probable exopolygalacturonase B (435 aa).

The first 15 residues, 1–15 (MKFFLATLFASAVSS), serve as a signal peptide directing secretion. 3 N-linked (GlcNAc...) asparagine glycosylation sites follow: Asn-59, Asn-184, and Asn-224. PbH1 repeat units lie at residues 208–239 (SKDV…DSLN), 240–261 (VDGL…SPKP), 262–283 (NTTN…SMGS), 294–315 (IEHA…RLKA), and 326–347 (INNI…VLDQ). The active-site Proton donor is Asp-254. Cys-256 and Cys-273 are joined by a disulfide. N-linked (GlcNAc...) asparagine glycosylation is found at Asn-262 and Asn-274. His-277 is a catalytic residue. N-linked (GlcNAc...) asparagine glycosylation is found at Asn-301, Asn-328, Asn-365, and Asn-373. Residues 366 to 388 (VTNILFENISGTSSGKNGKVVAD) form a PbH1 6 repeat. The cysteines at positions 391 and 397 are disulfide-linked. Asn-406 carries an N-linked (GlcNAc...) asparagine glycan.

The protein belongs to the glycosyl hydrolase 28 family.

It is found in the secreted. It carries out the reaction [(1-&gt;4)-alpha-D-galacturonosyl](n) + H2O = alpha-D-galacturonate + [(1-&gt;4)-alpha-D-galacturonosyl](n-1). Functionally, specific in hydrolyzing the terminal glycosidic bond of polygalacturonic acid and oligogalacturonates. The protein is Probable exopolygalacturonase B (pgxB) of Aspergillus oryzae (strain ATCC 42149 / RIB 40) (Yellow koji mold).